A 906-amino-acid polypeptide reads, in one-letter code: Rho GTPase-activating protein gacJ (906 aa).

Positions 53 to 117 are disordered; the sequence is LEGHLNPSSH…RDNSRSDNIR (65 aa). The span at 69 to 79 shows a compositional bias: low complexity; the sequence is NNNNNNNNNNN. Basic and acidic residues predominate over residues 92–117; sequence SRSDSKHHNRENSKSDRDNSRSDNIR. Residues 161–348 form the Rho-GAP domain; sequence EELQSLYPDQ…YMLEYFNDIF (188 aa). 3 disordered regions span residues 368 to 415, 452 to 864, and 877 to 906; these read DTTS…SRSK, EIIP…SVLT, and ANQAKKNPLSNSGGLKQISPDLIKSNNINK. Positions 381 to 404 are enriched in polar residues; the sequence is NGGSPRTSNTPYQQQHQLSSQSMA. The segment covering 461–487 has biased composition (low complexity); that stretch reads TTTTTTTTTNTTTTTTTTNTTPNNTTT. 2 stretches are compositionally biased toward pro residues: residues 494-510 and 547-560; these read PVPPKPNLIPRKLPPNP and QPPPPRKPTSPSPP. Positions 565–574 are enriched in polar residues; sequence KPTSKSDFIP. 2 stretches are compositionally biased toward low complexity: residues 575–597 and 613–629; these read STNNNLNNNNTTTTTSSLISIPK and IEEPINPNLNINSTTTT. Over residues 637 to 649 the composition is skewed to polar residues; that stretch reads FKNNGTISSGSKS. 2 stretches are compositionally biased toward low complexity: residues 650–663 and 683–694; these read NPNLQNLLNTNQPL and SKPITTTPTIKK. Residues 708 to 721 show a composition bias toward pro residues; that stretch reads PPSPSSSSPSPPHN. Low complexity-rich tracts occupy residues 754-772, 785-816, and 844-861; these read PTIPTQTTTASSSSTPTTP, PPINTSQTNNNISNSSIPSPKSKSALSLSTPK, and SSPTSSSPLQSPKISSPS. The segment covering 880–890 has biased composition (polar residues); that stretch reads AKKNPLSNSGG.

It is found in the cytoplasm. Rho GTPase-activating protein involved in the signal transduction pathway. In Dictyostelium discoideum (Social amoeba), this protein is Rho GTPase-activating protein gacJ (gacJ).